We begin with the raw amino-acid sequence, 157 residues long: SsrA-binding protein (157 aa).

Positions 133 to 157 (LHDKRESEKKRDWGREKGRLLRARG) are disordered. The span at 135–151 (DKRESEKKRDWGREKGR) shows a compositional bias: basic and acidic residues.

Belongs to the SmpB family.

Its subcellular location is the cytoplasm. Functionally, required for rescue of stalled ribosomes mediated by trans-translation. Binds to transfer-messenger RNA (tmRNA), required for stable association of tmRNA with ribosomes. tmRNA and SmpB together mimic tRNA shape, replacing the anticodon stem-loop with SmpB. tmRNA is encoded by the ssrA gene; the 2 termini fold to resemble tRNA(Ala) and it encodes a 'tag peptide', a short internal open reading frame. During trans-translation Ala-aminoacylated tmRNA acts like a tRNA, entering the A-site of stalled ribosomes, displacing the stalled mRNA. The ribosome then switches to translate the ORF on the tmRNA; the nascent peptide is terminated with the 'tag peptide' encoded by the tmRNA and targeted for degradation. The ribosome is freed to recommence translation, which seems to be the essential function of trans-translation. This Bradyrhizobium sp. (strain BTAi1 / ATCC BAA-1182) protein is SsrA-binding protein.